A 55-amino-acid chain; its full sequence is uncharacterized protein (55 aa).

The signal sequence occupies residues 1 to 25; it reads MKFVKAIWPFVAVAIVFMFMSAFKF.

This is an uncharacterized protein from Bacillus subtilis (strain 168).